Consider the following 134-residue polypeptide: SNAPIN protein homolog (134 aa).

Residues 50 to 124 (QLQAELRGQL…EKEQRRRQAL (75 aa)) are a coiled coil.

The protein belongs to the SNAPIN family. Component of the biogenesis of lysosome-related organelles complex-1 (BLOC-1) composed of Blos1, Blos2, Blos3, Blos4, Dysb, Muted, Pldn and Snapin. Interacts with Blos2 and Dysb.

Its subcellular location is the membrane. The protein localises to the cytoplasm. It is found in the cytosol. Functionally, component of the biogenesis of lysosome-related organelles complex-1 (BLOC-1) involved in pigment granule biogenesis. May participate in the coupling of lysosomes to microtubule plus-end-directed kinesin motor. In Drosophila melanogaster (Fruit fly), this protein is SNAPIN protein homolog.